A 523-amino-acid chain; its full sequence is 2-isopropylmalate synthase (523 aa).

Residues 5–267 (VIIFDTTLRD…HTNINHHEIW (263 aa)) form the Pyruvate carboxyltransferase domain. Mn(2+) is bound by residues Asp-14, His-202, His-204, and Asn-238. The segment at 392–523 (RLDYFSVQSG…QNKENNKETV (132 aa)) is regulatory domain.

The protein belongs to the alpha-IPM synthase/homocitrate synthase family. LeuA type 1 subfamily. Homodimer. The cofactor is Mn(2+).

The protein localises to the cytoplasm. It carries out the reaction 3-methyl-2-oxobutanoate + acetyl-CoA + H2O = (2S)-2-isopropylmalate + CoA + H(+). The protein operates within amino-acid biosynthesis; L-leucine biosynthesis; L-leucine from 3-methyl-2-oxobutanoate: step 1/4. Functionally, catalyzes the condensation of the acetyl group of acetyl-CoA with 3-methyl-2-oxobutanoate (2-ketoisovalerate) to form 3-carboxy-3-hydroxy-4-methylpentanoate (2-isopropylmalate). The chain is 2-isopropylmalate synthase from Salmonella newport (strain SL254).